The primary structure comprises 77 residues: Translation initiation factor IF-1, chloroplastic (77 aa).

The S1-like domain maps to 1-71; sequence MKEQKWVHEG…TRGRIIYRLR (71 aa).

Belongs to the IF-1 family. As to quaternary structure, component of the 30S ribosomal translation pre-initiation complex which assembles on the 30S ribosome in the order IF-2 and IF-3, IF-1 and N-formylmethionyl-tRNA(fMet); mRNA recruitment can occur at any time during PIC assembly.

It is found in the plastid. Its subcellular location is the chloroplast. Its function is as follows. One of the essential components for the initiation of protein synthesis. Stabilizes the binding of IF-2 and IF-3 on the 30S subunit to which N-formylmethionyl-tRNA(fMet) subsequently binds. Helps modulate mRNA selection, yielding the 30S pre-initiation complex (PIC). Upon addition of the 50S ribosomal subunit IF-1, IF-2 and IF-3 are released leaving the mature 70S translation initiation complex. This is Translation initiation factor IF-1, chloroplastic from Cercidiphyllum japonicum (Katsura tree).